The following is a 551-amino-acid chain: DNA mismatch repair protein MutL (551 aa).

The protein belongs to the DNA mismatch repair MutL/HexB family.

Its function is as follows. This protein is involved in the repair of mismatches in DNA. It is required for dam-dependent methyl-directed DNA mismatch repair. May act as a 'molecular matchmaker', a protein that promotes the formation of a stable complex between two or more DNA-binding proteins in an ATP-dependent manner without itself being part of a final effector complex. The chain is DNA mismatch repair protein MutL from Thermosipho melanesiensis (strain DSM 12029 / CIP 104789 / BI429).